Reading from the N-terminus, the 68-residue chain is ATP synthase protein 8 (68 aa).

A helical membrane pass occupies residues 8–24 (TWLTIITPTLLALFLIT). Residue Lys-54 is modified to N6-acetyllysine; alternate. Position 54 is an N6-succinyllysine; alternate (Lys-54). Lys-57 is subject to N6-acetyllysine.

It belongs to the ATPase protein 8 family. F-type ATPases have 2 components, CF(1) - the catalytic core - and CF(0) - the membrane proton channel. Component of an ATP synthase complex composed of ATP5PB, ATP5MC1, ATP5F1E, ATP5PD, ATP5ME, ATP5PF, ATP5MF, MT-ATP6, MT-ATP8, ATP5F1A, ATP5F1B, ATP5F1D, ATP5F1C, ATP5PO, ATP5MG, ATP5MK and ATP5MJ. Interacts with PRICKLE3.

Its subcellular location is the mitochondrion membrane. In terms of biological role, mitochondrial membrane ATP synthase (F(1)F(0) ATP synthase or Complex V) produces ATP from ADP in the presence of a proton gradient across the membrane which is generated by electron transport complexes of the respiratory chain. F-type ATPases consist of two structural domains, F(1) - containing the extramembraneous catalytic core and F(0) - containing the membrane proton channel, linked together by a central stalk and a peripheral stalk. During catalysis, ATP synthesis in the catalytic domain of F(1) is coupled via a rotary mechanism of the central stalk subunits to proton translocation. Part of the complex F(0) domain. Minor subunit located with subunit a in the membrane. This chain is ATP synthase protein 8 (MT-ATP8), found in Pongo pygmaeus (Bornean orangutan).